Reading from the N-terminus, the 163-residue chain is Nucleotide-binding protein APL_1231 (163 aa).

It belongs to the YajQ family.

Nucleotide-binding protein. The protein is Nucleotide-binding protein APL_1231 of Actinobacillus pleuropneumoniae serotype 5b (strain L20).